We begin with the raw amino-acid sequence, 128 residues long: Large ribosomal subunit protein bL20c (128 aa).

It belongs to the bacterial ribosomal protein bL20 family.

It localises to the plastid. The protein localises to the chloroplast. Binds directly to 23S ribosomal RNA and is necessary for the in vitro assembly process of the 50S ribosomal subunit. It is not involved in the protein synthesizing functions of that subunit. In Nicotiana sylvestris (Wood tobacco), this protein is Large ribosomal subunit protein bL20c.